The primary structure comprises 613 residues: Forkhead box protein O (613 aa).

Disordered regions lie at residues 39–90 (RARS…KNSS), 182–205 (KSVRRRAASMETSRYEKRRGRAKK), 217–269 (GLND…RLSP), and 317–360 (QGFS…PASG). T44 is subject to Phosphothreonine; by PKB/AKT1. The segment covering 63 to 80 (TKASNQQLAPGDSQQAIQ) has biased composition (polar residues). S75 is subject to Phosphoserine. A compositionally biased stretch (low complexity) spans 81-90 (NANAAKKNSS). The segment at residues 95 to 201 (WGNLSYADLI…ETSRYEKRRG (107 aa)) is a DNA-binding region (fork-head). Residue S190 is modified to Phosphoserine; by PKB/AKT1. Composition is skewed to polar residues over residues 221–230 (ATPSPSSSVS) and 256–265 (RASSNASSCG). S259 carries the phosphoserine; by PKB/AKT1 modification. A phosphoserine mark is found at S262, S263, and S268. Residues 327–336 (SQPPPPPYQP) are compositionally biased toward pro residues. A compositionally biased stretch (low complexity) spans 337–353 (PQHQQAQQQQQQQSPYA).

As to quaternary structure, interacts with melt.

It is found in the cytoplasm. The protein resides in the nucleus. Transcription factor involved in the regulation of the insulin signaling pathway. Consistently activates both the downstream target Thor\d4EBP and the feedback control target InR. Involved in negative regulation of the cell cycle, modulating cell growth and proliferation. In response to cellular stresses, such as nutrient deprivation or increased levels of reactive oxygen species, foxo is activated and inhibits growth through the action of target genes such as Thor. Foxo activated in the adult fat body can regulate lifespan in adults; an insulin peptide itself may function as one secondary messenger of insulin-regulated aging. Also regulates Lip4, homolog of human acid lipases, thereby acting as a key modulator of lipid metabolism by insulin signaling and integrates insulin responses to glucose and lipid homeostasis. This chain is Forkhead box protein O, found in Drosophila melanogaster (Fruit fly).